The following is a 441-amino-acid chain: Nucleoprotein (441 aa).

At S5 the chain carries Phosphoserine; by host. One can recognise a CoV N NTD domain in the interval 14–136; it reads VPLSLYAPLR…QLPSVVEIVE (123 aa). The interval 16 to 146 is RNA-binding; that stretch reads LSLYAPLRVT…PNTPPASRAN (131 aa). 2 disordered regions span residues 131–219 and 231–278; these read VVEI…VTSR and KSLG…LKDI. S143 carries the phosphoserine; by host modification. Residues 143–215 are compositionally biased toward low complexity; that stretch reads SRANSRSRSR…NRNQSNDRGG (73 aa). Basic and acidic residues-rich tracts occupy residues 238-255 and 269-278; these read NPDR…KSDN and TSKERDLKDI. The CoV N CTD domain maps to 266–382; the sequence is SRATSKERDL…AFKTGNAKLQ (117 aa). The dimerization stretch occupies residues 277 to 379; the sequence is DIPEWRRIPK…QVDAFKTGNA (103 aa).

The protein belongs to the alphacoronavirus nucleocapsid protein family. Homooligomer. Both monomeric and oligomeric forms interact with RNA. Interacts with protein M. Interacts with NSP3; this interaction serves to tether the genome to the newly translated replicase-transcriptase complex at a very early stage of infection. Interacts with host RSAD2; this interaction inhibits viral replication. Post-translationally, ADP-ribosylated. The ADP-ribosylation is retained in the virion during infection. Phosphorylated on serine and threonine residues.

Its subcellular location is the virion. The protein localises to the host endoplasmic reticulum-Golgi intermediate compartment. The protein resides in the host Golgi apparatus. Functionally, packages the positive strand viral genome RNA into a helical ribonucleocapsid (RNP) and plays a fundamental role during virion assembly through its interactions with the viral genome and membrane protein M. Plays an important role in enhancing the efficiency of subgenomic viral RNA transcription as well as viral replication. The polypeptide is Nucleoprotein (Porcine epidemic diarrhea virus (strain CV777) (PEDV)).